A 102-amino-acid polypeptide reads, in one-letter code: Circadian clock protein KaiB3 (102 aa).

The protein belongs to the KaiB family. Purifies as a monomer and homotetramer. Interacts with KaiC1 and KaiC3.

A paralog of KaiB1, the major clock oscillator protein in this species. KaiB3 and KaiC3 may cross talk with the core oscillator. The monomer reduces the ATPase activity of KaiC3 by 55%, the homotetramer has no effect. Its function is as follows. A metamorphic protein which may reversibly switch between an inactive tetrameric fold and a rare thioredoxin-like monomeric fold (KaiB(fs)). In Synechocystis sp. (strain ATCC 27184 / PCC 6803 / Kazusa), this protein is Circadian clock protein KaiB3.